Here is a 188-residue protein sequence, read N- to C-terminus: NADH-quinone oxidoreductase subunit I 2 (188 aa).

4Fe-4S ferredoxin-type domains lie at 56–88 and 98–127; these read HFLK…VVPY and AKFE…LGQQ. Residues Cys-68, Cys-71, Cys-74, Cys-78, Cys-107, Cys-110, Cys-113, and Cys-117 each coordinate [4Fe-4S] cluster.

It belongs to the complex I 23 kDa subunit family. NDH-1 is composed of 14 different subunits. Subunits NuoA, H, J, K, L, M, N constitute the membrane sector of the complex. It depends on [4Fe-4S] cluster as a cofactor.

It localises to the cell inner membrane. The enzyme catalyses a quinone + NADH + 5 H(+)(in) = a quinol + NAD(+) + 4 H(+)(out). NDH-1 shuttles electrons from NADH, via FMN and iron-sulfur (Fe-S) centers, to quinones in the respiratory chain. The immediate electron acceptor for the enzyme in this species is believed to be ubiquinone. Couples the redox reaction to proton translocation (for every two electrons transferred, four hydrogen ions are translocated across the cytoplasmic membrane), and thus conserves the redox energy in a proton gradient. This Rhizobium etli (strain ATCC 51251 / DSM 11541 / JCM 21823 / NBRC 15573 / CFN 42) protein is NADH-quinone oxidoreductase subunit I 2.